We begin with the raw amino-acid sequence, 697 residues long: MQTQEILRILRLPELSDLGQFFRSLSATTLVSVGALAAVLAYWLTHRPKALQPPCNLLKQSEEVEDGGGARRSVIGGCTQLLTHYYDDARTMYQVFRRGLSISGNGPCLGFRKPEQPYQWLSYQEVAKRAEFLGSGLLQHDCKVGTEQFVGVFAQNRPEWIIAELACYTYSMVVVPLYDTLGPGSISYIINTADICTVIVDKPHKATLLLEHVERKETPGLKLVILMEPFEDALRERGKKCGVDIKSMQAIEDCGRENHHAPVPPRPDDLSIVCFTSGTTGNPKGAMLTHGNVVADFSGFLKVTEKVIFPRQDDVLISFLPLAHMFERVIQSVVYCHGGRVGFFQGDIRLLSDDMKALRPTIFPVVPRLLNRMYDKIFHQADTSLKRWLLEFAAKRKQAEVRSGIIRNNSIWDELFFNKIQASLGGHVRMIVTGAAPASPTVLGFLRAALGCQVYEGYGQTECTAGCTFTTPGDWTSGHVGAPLPCNHIKLVDAEELNYWTCKGEGEICVKGPNVFKGYLKDEDRTKEALDSDGWLHTGDIGKWLPEGTLKIIDRKKHIFKLAQGEYVAPEKIENIYIRSEPVAQIYVHGDSLKAFLVGIVVPDPEVMPSWAQKKGIEGTYQELCMKKELKKAILDDMVMLGKESGLHSFEQVKAIYIHCDMFSVQNGLLTPTLKAKRPELREYFKKQIEELYLVSV.

A helical; Signal-anchor for type III membrane protein membrane pass occupies residues 25–45 (LSATTLVSVGALAAVLAYWLT). The Cytoplasmic segment spans residues 46-697 (HRPKALQPPC…QIEELYLVSV (652 aa)).

Belongs to the ATP-dependent AMP-binding enzyme family. Mg(2+) serves as cofactor.

The protein localises to the mitochondrion outer membrane. The protein resides in the peroxisome membrane. It localises to the microsome membrane. It is found in the endoplasmic reticulum membrane. It catalyses the reaction a long-chain fatty acid + ATP + CoA = a long-chain fatty acyl-CoA + AMP + diphosphate. The catalysed reaction is (5Z,8Z,11Z,14Z)-eicosatetraenoate + ATP + CoA = (5Z,8Z,11Z,14Z)-eicosatetraenoyl-CoA + AMP + diphosphate. The enzyme catalyses 15-hydroxy-(5Z,8Z,11Z,13E)-eicosatetraenoate + ATP + CoA = 15-hydroxy-(5Z,8Z,11Z,13E)-eicosatetraenoyl-CoA + AMP + diphosphate. It carries out the reaction 12-hydroxy-(5Z,8Z,10E,14Z)-eicosatetraenoate + ATP + CoA = 12-hydroxy-(5Z,8Z,10E,14Z)-eicosatetraenoyl-CoA + AMP + diphosphate. It catalyses the reaction 5-hydroxy-(6E,8Z,11Z,14Z)-eicosatetraenoate + ATP + CoA = 5-hydroxy-(6E,8Z,11Z,14Z)-eicosatetraenoyl-CoA + AMP + diphosphate. The catalysed reaction is hexadecanoate + ATP + CoA = hexadecanoyl-CoA + AMP + diphosphate. The enzyme catalyses (E)-hexadec-2-enoate + ATP + CoA = (2E)-hexadecenoyl-CoA + AMP + diphosphate. In terms of biological role, catalyzes the conversion of long-chain fatty acids to their active form acyl-CoA for both synthesis of cellular lipids, and degradation via beta-oxidation. Plays an important role in fatty acid metabolism in brain and the acyl-CoAs produced may be utilized exclusively for the synthesis of the brain lipid. This is Long-chain-fatty-acid--CoA ligase 6 (Acsl6) from Mus musculus (Mouse).